Consider the following 144-residue polypeptide: Large ribosomal subunit protein uL13 (144 aa).

This sequence belongs to the universal ribosomal protein uL13 family. In terms of assembly, part of the 50S ribosomal subunit.

Functionally, this protein is one of the early assembly proteins of the 50S ribosomal subunit, although it is not seen to bind rRNA by itself. It is important during the early stages of 50S assembly. This is Large ribosomal subunit protein uL13 from Clostridium perfringens (strain ATCC 13124 / DSM 756 / JCM 1290 / NCIMB 6125 / NCTC 8237 / Type A).